We begin with the raw amino-acid sequence, 148 residues long: MSKYAILGLVLVGTVASLDFIGRTQSAAIKGRLVCEGKPASGVKVKLMESDNSFGPGFLDSDDKMASGKADSHGEFNLSGSTKEITGIEPYLVVFHDCKDGITPCQRVFRVNVPKSYTNSGSSAKKTYDAGVIELAGKYPGETRSCLN.

Residues 1-17 form the signal peptide; sequence MSKYAILGLVLVGTVAS. N-linked (GlcNAc...) asparagine glycosylation is present at Asn77.

It belongs to the nematode transthyretin-like family.

The protein localises to the secreted. The chain is Transthyretin-like protein 2 (ttr-2) from Caenorhabditis elegans.